An 84-amino-acid chain; its full sequence is Large ribosomal subunit protein bL27 (84 aa).

The segment at 1-22 (MAHKKGASSTRNGRDSNAQRLG) is disordered. The span at 7–19 (ASSTRNGRDSNAQ) shows a compositional bias: polar residues.

It belongs to the bacterial ribosomal protein bL27 family.

The chain is Large ribosomal subunit protein bL27 from Streptomyces coelicolor (strain ATCC BAA-471 / A3(2) / M145).